A 320-amino-acid chain; its full sequence is TPR repeat-containing protein MJ0263 (320 aa).

TPR repeat units follow at residues 12 to 45 (ILKD…DKDN), 46 to 79 (PLVL…EGTS), 80 to 113 (LLSL…SKPC), 114 to 147 (YLSP…YPNL), 148 to 181 (TSIL…KKDD), 182 to 215 (AHAW…NENL), 216 to 249 (VHVY…FPND), 250 to 283 (VEAK…KNVK), and 289 to 320 (KSSI…DNNI).

In Methanocaldococcus jannaschii (strain ATCC 43067 / DSM 2661 / JAL-1 / JCM 10045 / NBRC 100440) (Methanococcus jannaschii), this protein is TPR repeat-containing protein MJ0263.